Reading from the N-terminus, the 2055-residue chain is Multiple PDZ domain protein (2055 aa).

One can recognise an L27 domain in the interval 1–63 (MLETIDKNRA…SLQQLKDQVN (63 aa)). The PDZ 1 domain occupies 138 to 225 (IFELLKPPCG…TVQLVIARGS (88 aa)). S231 is subject to Phosphoserine. The 81-residue stretch at 258 to 338 (TIELVNDGSG…RVKLMIARGA (81 aa)) folds into the PDZ 2 domain. A compositionally biased stretch (low complexity) spans 348 to 360 (LGITLSSSTSSTS). The segment at 348 to 372 (LGITLSSSTSSTSEMRVDASTQKND) is disordered. 3 PDZ domains span residues 378–464 (DVEL…MRKG), 546–627 (VAHV…CRRT), and 693–779 (SIEL…VAKP). 2 positions are modified to phosphoserine: S783 and S1066. Residues 996–1077 (TVTIAKGSSS…IGPDIKITYV (82 aa)) enclose the PDZ 6 domain. Positions 1111 to 1130 (PELPEREEGEGEESELQNAA) are disordered. The PDZ 7 domain maps to 1139–1231 (RVELWREPSK…PVVFMVQSII (93 aa)). R1158 carries the omega-N-methylarginine modification. A compositionally biased stretch (polar residues) spans 1264–1274 (LTTDQAPSQSE). Residues 1264–1299 (LTTDQAPSQSESETEKPALCNVPPSSPSVFSEMGSD) are disordered. In terms of domain architecture, PDZ 8 spans 1338 to 1421 (VIELEKGQSG…KVKIIFIRNA (84 aa)). The segment covering 1435–1445 (ADSPSSTSDSP) has biased composition (low complexity). The segment at 1435–1459 (ADSPSSTSDSPQNKEVEPCSTTSAS) is disordered. Residues 1471–1552 (QLELPKDQGG…TVKLTVRAEN (82 aa)) enclose the PDZ 9 domain. A disordered region spans residues 1557-1597 (AVPSSAVTVSGERKDNSQTPAVPAPDLEPIPSTSRSSTPAV). 2 consecutive PDZ domains span residues 1614–1697 (TIEI…YRDE) and 1710–1792 (TIEL…GRVK). The interval 1795-1834 (PFHSERRPSQSSQVSESSLSSFTPPLSGINTSESLESNSK) is disordered. Residues S1803 and S1809 each carry the phosphoserine modification. Residues 1803–1815 (SQSSQVSESSLSS) are compositionally biased toward low complexity. Residues 1816–1834 (FTPPLSGINTSESLESNSK) show a composition bias toward polar residues. PDZ domains follow at residues 1847–1933 (TVEI…VAGG) and 1972–2055 (TITL…MVLS).

In terms of assembly, interacts with CLDN5, DLG4, GRIN1, SYNGAP1, CAMK2A and CAMK2B, HTR2A, HTR2B, HTR2C, PLEKHA1/TAPP1 and PLEKHA2/TAPP2. Interacts with F11R/JAM, CLDN1, NG2, CXADR, CRB1, MPP4 and PALS1. Interacts with FAT4 (via cytoplasmic domain). Interacts with DLL1. As to expression, in the brain, it is strongly expressed in the choroid plexus. Within the hippocampal formation, strongest expression was seen in the soma of CA1-4 pyramidal cells. Expressed in most neocortical regions with the strongest expression in piriform cortex and amygdaloid nuclei but also detected in the subiculum and olfactory bulb. In the cerebellum, the highest level of expression was found in Purkinje cells. Moderately expressed in the granular layer and molecular layer. Expressed in the pontine nuclei, parts of spinal trigeminal nuclei, and the principal sensory trigeminal nuclei of the metencephalon. Expressed in all thalamic and hypothalamic nuclei, and the substantia nigra (at protein level). Ubiquitously expressed.

It is found in the cell membrane. The protein localises to the apical cell membrane. It localises to the postsynaptic density. The protein resides in the cell projection. Its subcellular location is the dendrite. It is found in the cell junction. The protein localises to the tight junction. It localises to the synapse. The protein resides in the synaptosome. Its function is as follows. Member of the NMDAR signaling complex that may play a role in control of AMPAR potentiation and synaptic plasticity in excitatory synapses. Promotes clustering of HT2RC at the cell surface. This is Multiple PDZ domain protein (Mpdz) from Mus musculus (Mouse).